We begin with the raw amino-acid sequence, 262 residues long: Dihydroorotate dehydrogenase B (NAD(+)), electron transfer subunit (262 aa).

One can recognise an FAD-binding FR-type domain in the interval 2–102; that stretch reads SKVFDAKVLA…MGPLGRGFTL (101 aa). Residues 53–56, 70–72, and 77–78 contribute to the FAD site; these read RPIS, LFR, and GT. [2Fe-2S] cluster-binding residues include cysteine 224, cysteine 229, cysteine 232, and cysteine 248.

The protein belongs to the PyrK family. As to quaternary structure, heterotetramer of 2 PyrK and 2 PyrD type B subunits. However, the metal reductase complex seems to be composed of a heterooctamer of 4 PyrK and 4 PyrD subunits. FAD serves as cofactor. The cofactor is [2Fe-2S] cluster.

The protein localises to the cytoplasm. It participates in pyrimidine metabolism; UMP biosynthesis via de novo pathway; orotate from (S)-dihydroorotate (NAD(+) route): step 1/1. Functionally, responsible for channeling the electrons from the oxidation of dihydroorotate from the FMN redox center in the PyrD type B subunit to the ultimate electron acceptor NAD(+). Together with PyrD, also forms a metal reductase complex able to reduce Fe(III)-chelates to Fe(II)-chelates, as well as soluble Cr(VI) and U(VI), using NADH as electron donor. To a lesser extent, can also use NADPH as an electron donor. Is unable to reduce riboflavin and FMN with NADH as electron donor. May have an in vivo role in metal reduction in D.reducens, which is an organism capable of reducing contaminant heavy metals and radionuclides. This is Dihydroorotate dehydrogenase B (NAD(+)), electron transfer subunit from Desulforamulus reducens (strain ATCC BAA-1160 / DSM 100696 / MI-1) (Desulfotomaculum reducens).